The chain runs to 383 residues: Na(+)/H(+) antiporter NhaA (383 aa).

The next 11 helical transmembrane spans lie at L10 to P30, L56 to I76, I91 to S111, G121 to G141, L150 to F170, S174 to N194, V206 to A226, P254 to S274, I289 to F308, G327 to F347, and A355 to L375.

The protein belongs to the NhaA Na(+)/H(+) (TC 2.A.33) antiporter family.

Its subcellular location is the cell inner membrane. It catalyses the reaction Na(+)(in) + 2 H(+)(out) = Na(+)(out) + 2 H(+)(in). Na(+)/H(+) antiporter that extrudes sodium in exchange for external protons. The sequence is that of Na(+)/H(+) antiporter NhaA from Francisella tularensis subsp. tularensis (strain SCHU S4 / Schu 4).